The primary structure comprises 277 residues: Phosphatidylglycerol--prolipoprotein diacylglyceryl transferase (277 aa).

The next 7 helical transmembrane spans lie at 21–41 (LAVRWYGLMYLFGFMFALWLA), 60–80 (LLFAGFLGVVIGGRVGYVLFY), 95–115 (VWTGGMSFHGGLLGVISAMLW), 124–144 (FFTIADFVAPLVPFGLGAGRL), 176–196 (SQLYEFALEGVVLFLILNWFI), 203–223 (GTVSGLFLFGYGTFRFLVEYV), and 239–259 (MGQILSLPMVIGGLLMMLWAF). A 1,2-diacyl-sn-glycero-3-phospho-(1'-sn-glycerol) is bound at residue arginine 143.

Belongs to the Lgt family.

It is found in the cell inner membrane. The catalysed reaction is L-cysteinyl-[prolipoprotein] + a 1,2-diacyl-sn-glycero-3-phospho-(1'-sn-glycerol) = an S-1,2-diacyl-sn-glyceryl-L-cysteinyl-[prolipoprotein] + sn-glycerol 1-phosphate + H(+). It participates in protein modification; lipoprotein biosynthesis (diacylglyceryl transfer). Its function is as follows. Catalyzes the transfer of the diacylglyceryl group from phosphatidylglycerol to the sulfhydryl group of the N-terminal cysteine of a prolipoprotein, the first step in the formation of mature lipoproteins. This is Phosphatidylglycerol--prolipoprotein diacylglyceryl transferase from Aliivibrio fischeri (strain ATCC 700601 / ES114) (Vibrio fischeri).